The following is a 589-amino-acid chain: Transmembrane 9 superfamily member 1 (589 aa).

The first 24 residues, 1 to 24, serve as a signal peptide directing secretion; it reads MPSSSSAAVLVFLLLVSLLTPTFA. At 25 to 222 the chain is on the lumenal side; that stretch reads SDSDHKYQAE…YPFFEHQIHW (198 aa). Residues 223-243 form a helical membrane-spanning segment; it reads FSIFNSFMMVIFLTGLVSMIL. Over 244-293 the chain is Cytoplasmic; that stretch reads MRTLRNDYAKYAREDDDLESLERDVSEESGWKLVHGDVFRPASSLVLLSA. Residues 294-314 traverse the membrane as a helical segment; that stretch reads VVGTGAQLALLVLLVILMAIV. The Lumenal portion of the chain corresponds to 315-321; it reads GTLYVGR. Residues 322–342 traverse the membrane as a helical segment; it reads GAIVTTFIVCYALTSFVSGYV. Residues 343–364 are Cytoplasmic-facing; that stretch reads SGGMYSRSGGKHWIKCMVLTAS. Residues 365-385 form a helical membrane-spanning segment; sequence LFPFLCFGIGFLLNTIAIFYG. Residues 386–395 are Lumenal-facing; that stretch reads SLAAIPFGTM. A helical membrane pass occupies residues 396 to 416; sequence VVVFVIWGFISFPLALLGTVV. Residues 417–448 are Cytoplasmic-facing; the sequence is GRNWSGAPNNPCRVKTIPRPIPEKKWYLTPSV. Residues 449–469 form a helical membrane-spanning segment; it reads VSLMGGLLPFGSIFIEMYFVF. The Lumenal portion of the chain corresponds to 470 to 481; sequence TSFWNYKVYYVY. Residues 482 to 502 form a helical membrane-spanning segment; it reads GFMLLVFVILVIVTVCVTIVG. Over 503 to 518 the chain is Cytoplasmic; the sequence is TYFLLNAENYHWQWTS. Residues 519–539 traverse the membrane as a helical segment; it reads FFSAASTAVYVYLYSIYYYYV. Topologically, residues 540-550 are lumenal; the sequence is KTKMSGFFQTS. The chain crosses the membrane as a helical span at residues 551-571; the sequence is FYFGYTMMFCLGLGILCGAVG. Over 572–589 the chain is Cytoplasmic; sequence YLGSNLFVRRIYRNIKCD. Positions 578 to 583 match the Endoplasmic reticulum export signal motif; it reads FVRRIY. Positions 587–589 match the Golgi retention signal motif; sequence KCD.

Belongs to the nonaspanin (TM9SF) (TC 9.A.2) family. Ubiquitous.

The protein localises to the endosome membrane. Its subcellular location is the golgi apparatus membrane. The protein is Transmembrane 9 superfamily member 1 of Arabidopsis thaliana (Mouse-ear cress).